The sequence spans 233 residues: Gamma-glutamyl-hercynylcysteine sulfoxide hydrolase (233 aa).

The Nucleophile role is filled by Cys2. Residues 2–233 (CRHLGWLGAQ…TALDRAKGPR (232 aa)) enclose the Glutamine amidotransferase type-2 domain.

It carries out the reaction gamma-L-glutamyl-hercynylcysteine S-oxide + H2O = S-(hercyn-2-yl)-L-cysteine S-oxide + L-glutamate. It participates in amino-acid biosynthesis; ergothioneine biosynthesis. Catalyzes the hydrolysis of the gamma-glutamyl amide bond of hercynyl-gamma-L-glutamyl-L-cysteine sulfoxide to produce hercynylcysteine sulfoxide, a step in the biosynthesis pathway of ergothioneine. ERG is one of the major redox buffers which protects bacteria against redox stressors and antibiotics; loss of ERG or mycothiol (MSH, the other major redox buffer in this bacteria) leads to respiratory alterations and bioenergetic deficiencies that negatively impact virulence. The chain is Gamma-glutamyl-hercynylcysteine sulfoxide hydrolase from Mycobacterium tuberculosis (strain CDC 1551 / Oshkosh).